The sequence spans 402 residues: uncharacterized protein (402 aa).

Residues Met1–Asn12 are Cytoplasmic-facing. A helical membrane pass occupies residues Ala13–Thr33. At Lys34 to Gln50 the chain is on the extracellular side. Residues Phe51–Phe71 traverse the membrane as a helical segment. The Cytoplasmic portion of the chain corresponds to Tyr72–Leu103. Residues Ile104–Val124 form a helical membrane-spanning segment. At Gly125–Ser134 the chain is on the extracellular side. The chain crosses the membrane as a helical span at residues Leu135–Leu155. At Gln156–Lys165 the chain is on the cytoplasmic side. A helical transmembrane segment spans residues Ile166–Gln186. The Extracellular portion of the chain corresponds to Glu187–Val206. Residues Ile207–Phe227 form a helical membrane-spanning segment. Residues Thr228–Leu271 lie on the Cytoplasmic side of the membrane. A helical transmembrane segment spans residues Thr272–Leu292. Residues Glu293–Arg353 are Extracellular-facing. The helical transmembrane segment at Phe354–Phe374 threads the bilayer. Residues Gly375–Glu402 lie on the Cytoplasmic side of the membrane.

Belongs to the TPT transporter family.

It localises to the membrane. This is an uncharacterized protein from Saccharomyces cerevisiae (strain ATCC 204508 / S288c) (Baker's yeast).